Consider the following 438-residue polypeptide: Ubiquitin carboxyl-terminal hydrolase 27 (438 aa).

The 344-residue stretch at 78 to 421 (RGLINLGNTC…EGYLLFYHKQ (344 aa)) folds into the USP domain. Cys87 (nucleophile) is an active-site residue. His380 (proton acceptor) is an active-site residue.

It belongs to the peptidase C19 family. As to quaternary structure, interacts with phosphorylated BCL2L11 isoform BIMEL; this interaction leads to BCL2L11 deubiquitination and stabilization.

The protein localises to the cytoplasm. It localises to the cytosol. Its subcellular location is the nucleus. It catalyses the reaction Thiol-dependent hydrolysis of ester, thioester, amide, peptide and isopeptide bonds formed by the C-terminal Gly of ubiquitin (a 76-residue protein attached to proteins as an intracellular targeting signal).. In terms of biological role, deubiquitinase involved in innate antiviral immunity by mediating deubiquitination of CGAS and RIGI. Negatively regulates RIGI by mediating 'Lys-63'-linked deubiquitination of RIGI, inhibiting type I interferon signaling. Also regulates 'Lys-63'-linked ubiquitination level of MDA5/IFIH1. Acts as a positive regulator of the cGAS-STING pathway by catalyzing 'Lys-48'-linked deubiquitination of CGAS, thereby promoting its stabilization. Can reduce the levels of BCL2L11/BIM ubiquitination and stabilize BCL2L11 in response to the RAF-MAPK-degradation signal. By acting on BCL2L11 levels, may counteract the anti-apoptotic effects of MAPK activity. The chain is Ubiquitin carboxyl-terminal hydrolase 27 from Homo sapiens (Human).